Reading from the N-terminus, the 72-residue chain is Peptide Ctri9194 (72 aa).

An N-terminal signal peptide occupies residues 1–23; it reads MKTQNVLLSFGIVFLMISFSSET. I38 is subject to Isoleucine amide. Residues 42–72 constitute a propeptide that is removed on maturation; it reads SLKDVESLDFLFDPTFTAADLAVLENALEDY.

Belongs to the non-disulfide-bridged peptide (NDBP) superfamily. Short antimicrobial peptide (group 4) family. Expressed by the venom gland.

It localises to the secreted. Its function is as follows. Antimicrobial peptide. This chain is Peptide Ctri9194, found in Chaerilus tricostatus (Scorpion).